The chain runs to 35 residues: Jingzhaotoxin F6-27.63 (35 aa).

Cystine bridges form between C2-C17, C9-C22, and C16-C29.

This sequence belongs to the neurotoxin 10 (Hwtx-1) family. 49 (Jztx-F6) subfamily. As to expression, expressed by the venom gland.

The protein resides in the secreted. Functionally, probable ion channel inhibitor. This is Jingzhaotoxin F6-27.63 from Chilobrachys guangxiensis (Chinese earth tiger tarantula).